Consider the following 421-residue polypeptide: MEKFRVIGSTQPLVGEVTISGAKNAALPILFASILAEEPVEVANVPHLRDIDTTMELLKRLGAKVERNGSVHVDPSSIDEYCAPYDLVKTMRASIWALGPLVARFGQGQVSLPGGCAIGARPVDLHITGLEQLGATITLEDGYVKAHVDGRLQGAHIVMDKVSVGATITIMCAATLAEGTTVLDNAAREPEIVDTAKFLNTLGAKISGAGTDTITIEGVERLGGGKHAVVADRIETGTFLVAAAVSGGKVVCHNTQAHLLEAVLAKLEEAGALVETGEDWISVDMTGRELKAVNIRTAPHPGFPTDMQAQFTLLNMMAKGGGVITETIFENRFMHVPELKRMGAKAEIEGNTVICGDVERLSAAQVMATDLRASASLVIAGCIAKGETIVDRIYHIDRGYDKIENKLNALGAKIERFRESN.

23–24 (KN) serves as a coordination point for phosphoenolpyruvate. R92 is a UDP-N-acetyl-alpha-D-glucosamine binding site. C116 acts as the Proton donor in catalysis. C116 bears the 2-(S-cysteinyl)pyruvic acid O-phosphothioketal mark. UDP-N-acetyl-alpha-D-glucosamine contacts are provided by residues 121 to 125 (RPVDL), 161 to 164 (KVSV), D306, and I328.

Belongs to the EPSP synthase family. MurA subfamily.

It is found in the cytoplasm. The enzyme catalyses phosphoenolpyruvate + UDP-N-acetyl-alpha-D-glucosamine = UDP-N-acetyl-3-O-(1-carboxyvinyl)-alpha-D-glucosamine + phosphate. The protein operates within cell wall biogenesis; peptidoglycan biosynthesis. Functionally, cell wall formation. Adds enolpyruvyl to UDP-N-acetylglucosamine. The chain is UDP-N-acetylglucosamine 1-carboxyvinyltransferase from Vibrio vulnificus (strain CMCP6).